A 1174-amino-acid polypeptide reads, in one-letter code: Tyrosine-protein phosphatase non-receptor type 21 (1174 aa).

Residues 23–308 form the FERM domain; that stretch reads LVARIQLLNN…ARHKFYRLNQ (286 aa). A compositionally biased stretch (polar residues) spans 396-423; that stretch reads SAHSTNSLNNPQPYLQPSPMSSNPSITG. A disordered region spans residues 396-445; the sequence is SAHSTNSLNNPQPYLQPSPMSSNPSITGSDVMRPDYLPSHRHSAVIPPSY. Serine 577, serine 589, serine 590, serine 637, and serine 673 each carry phosphoserine. Positions 673 to 692 are disordered; it reads SQPSVFTERTQREGPEEAEG. Residues 681–692 show a composition bias toward basic and acidic residues; the sequence is RTQREGPEEAEG. 2 positions are modified to phosphoserine: serine 710 and serine 711. Disordered regions lie at residues 711-745 and 769-806; these read SEEEEDEDFEEESGARAPPARAREPRPGLAQDPPG and KRMMDSSPVRTTAEAQRPWRDGLLMPSMSESDLTTSGR. The segment covering 712–722 has biased composition (acidic residues); that stretch reads EEEEDEDFEEE. Polar residues predominate over residues 796 to 805; sequence MSESDLTTSG. Residues serine 797, serine 799, and serine 804 each carry the phosphoserine modification. A Tyrosine-protein phosphatase domain is found at 896–1167; sequence VFTEYERILK…TFVYRVLIQF (272 aa). Substrate-binding positions include glutamate 1067, 1108 to 1114, and glutamine 1152; that span reads CSAGVGR. Cysteine 1108 (phosphocysteine intermediate) is an active-site residue.

Belongs to the protein-tyrosine phosphatase family. Non-receptor class subfamily.

Its subcellular location is the cytoplasm. It is found in the cytoskeleton. The catalysed reaction is O-phospho-L-tyrosyl-[protein] + H2O = L-tyrosyl-[protein] + phosphate. In Homo sapiens (Human), this protein is Tyrosine-protein phosphatase non-receptor type 21 (PTPN21).